The sequence spans 332 residues: Ketol-acid reductoisomerase (NADP(+)) (332 aa).

The KARI N-terminal Rossmann domain occupies Ala-2–Thr-182. Residues Tyr-25–Gln-28, Ser-53, and Asp-83–Gln-86 each bind NADP(+). His-108 is an active-site residue. Position 134 (Gly-134) interacts with NADP(+). The KARI C-terminal knotted domain maps to Thr-183–Gly-328. Asp-191, Glu-195, Glu-227, and Glu-231 together coordinate Mg(2+). Ser-252 contacts substrate.

This sequence belongs to the ketol-acid reductoisomerase family. Requires Mg(2+) as cofactor.

The catalysed reaction is (2R)-2,3-dihydroxy-3-methylbutanoate + NADP(+) = (2S)-2-acetolactate + NADPH + H(+). The enzyme catalyses (2R,3R)-2,3-dihydroxy-3-methylpentanoate + NADP(+) = (S)-2-ethyl-2-hydroxy-3-oxobutanoate + NADPH + H(+). It functions in the pathway amino-acid biosynthesis; L-isoleucine biosynthesis; L-isoleucine from 2-oxobutanoate: step 2/4. It participates in amino-acid biosynthesis; L-valine biosynthesis; L-valine from pyruvate: step 2/4. In terms of biological role, involved in the biosynthesis of branched-chain amino acids (BCAA). Catalyzes an alkyl-migration followed by a ketol-acid reduction of (S)-2-acetolactate (S2AL) to yield (R)-2,3-dihydroxy-isovalerate. In the isomerase reaction, S2AL is rearranged via a Mg-dependent methyl migration to produce 3-hydroxy-3-methyl-2-ketobutyrate (HMKB). In the reductase reaction, this 2-ketoacid undergoes a metal-dependent reduction by NADPH to yield (R)-2,3-dihydroxy-isovalerate. This is Ketol-acid reductoisomerase (NADP(+)) from Sulfolobus acidocaldarius (strain ATCC 33909 / DSM 639 / JCM 8929 / NBRC 15157 / NCIMB 11770).